Reading from the N-terminus, the 62-residue chain is uncharacterized protein (62 aa).

The segment at methionine 1 to leucine 26 is disordered. Residues proline 17 to leucine 26 are compositionally biased toward basic and acidic residues.

This is an uncharacterized protein from Homo sapiens (Human).